The primary structure comprises 102 residues: S-phase delaying protein 2 (102 aa).

The disordered stretch occupies residues 43–62 (FPSYHKDQTDRNELPQQKHD). Over residues 46–62 (YHKDQTDRNELPQQKHD) the composition is skewed to basic and acidic residues.

This sequence belongs to the DIF1/spd1 family.

Its subcellular location is the cytoplasm. The protein localises to the nucleus. Its function is as follows. Regulates the ribonucleotide reductase activity. The chain is S-phase delaying protein 2 (spd2) from Schizosaccharomyces pombe (strain 972 / ATCC 24843) (Fission yeast).